Reading from the N-terminus, the 1363-residue chain is Kinesin-like protein kif7 (1363 aa).

The 333-residue stretch at 15–347 (AVQVAVRVRP…LNYAKRARNI (333 aa)) folds into the Kinesin motor domain. Residue 94–101 (GQTGSGKT) participates in ATP binding. Coiled-coil stretches lie at residues 358–385 (EPDRIEGLELQIKALRRALENRQRSETR) and 491–552 (EDWR…LLAQ). Residues 603–622 (DSSSYSEQTQWDGTHGNTHC) are compositionally biased toward polar residues. Residues 603-642 (DSSSYSEQTQWDGTHGNTHCESSRKLNRDEDGHMQTTRDK) form a disordered region. Residues 623–640 (ESSRKLNRDEDGHMQTTR) show a composition bias toward basic and acidic residues. Coiled-coil stretches lie at residues 714 to 1068 (LLQA…AAIE) and 1116 to 1225 (DKVV…LREM). The tract at residues 1314–1346 (IVQPGMNSTHWSGSTSLPVTRPRREPRRSSLNT) is disordered. Positions 1318–1331 (GMNSTHWSGSTSLP) are enriched in polar residues.

It belongs to the TRAFAC class myosin-kinesin ATPase superfamily. Kinesin family. KIF27 subfamily. In terms of assembly, binds microtubules. Interacts with gli1 and sufu.

It is found in the cytoplasm. The protein localises to the cytoskeleton. Its subcellular location is the cell projection. It localises to the cilium. In terms of biological role, acts downstream of smo as an intracellular repressor of hedgehog signaling pathway, mainly through the suppression of gli1 activity. This negative regulatory effect is enhanced in conjunction with the suppressor of fused (sufu) protein. Positively regulates gli2a activity by promoting its dissociation from sufu. Involved in the regulation of microtubular dynamics. This Danio rerio (Zebrafish) protein is Kinesin-like protein kif7 (kif7).